Consider the following 267-residue polypeptide: DNA repair protein RecO (267 aa).

Belongs to the RecO family.

Its function is as follows. Involved in DNA repair and RecF pathway recombination. In Prochlorococcus marinus (strain MIT 9313), this protein is DNA repair protein RecO.